We begin with the raw amino-acid sequence, 291 residues long: 4-hydroxy-tetrahydrodipicolinate synthase (291 aa).

Threonine 45 is a pyruvate binding site. Tyrosine 131 (proton donor/acceptor) is an active-site residue. Residue lysine 159 is the Schiff-base intermediate with substrate of the active site. A pyruvate-binding site is contributed by isoleucine 202.

It belongs to the DapA family. In terms of assembly, homotetramer; dimer of dimers.

The protein localises to the cytoplasm. The catalysed reaction is L-aspartate 4-semialdehyde + pyruvate = (2S,4S)-4-hydroxy-2,3,4,5-tetrahydrodipicolinate + H2O + H(+). It participates in amino-acid biosynthesis; L-lysine biosynthesis via DAP pathway; (S)-tetrahydrodipicolinate from L-aspartate: step 3/4. In terms of biological role, catalyzes the condensation of (S)-aspartate-beta-semialdehyde [(S)-ASA] and pyruvate to 4-hydroxy-tetrahydrodipicolinate (HTPA). This is 4-hydroxy-tetrahydrodipicolinate synthase from Methanosarcina mazei (strain ATCC BAA-159 / DSM 3647 / Goe1 / Go1 / JCM 11833 / OCM 88) (Methanosarcina frisia).